Here is a 71-residue protein sequence, read N- to C-terminus: DNA-directed RNA polymerase subunit epsilon (71 aa).

The protein belongs to the RNA polymerase subunit epsilon family. As to quaternary structure, RNAP is composed of a core of 2 alpha, a beta and a beta' subunit. The core is associated with a delta subunit, and at least one of epsilon or omega. When a sigma factor is associated with the core the holoenzyme is formed, which can initiate transcription.

The catalysed reaction is RNA(n) + a ribonucleoside 5'-triphosphate = RNA(n+1) + diphosphate. Functionally, a non-essential component of RNA polymerase (RNAP). This chain is DNA-directed RNA polymerase subunit epsilon, found in Anoxybacillus flavithermus (strain DSM 21510 / WK1).